We begin with the raw amino-acid sequence, 196 residues long: Molybdenum cofactor guanylyltransferase (196 aa).

Residues 10-12 (LAG), lysine 23, asparagine 51, aspartate 69, and aspartate 99 contribute to the GTP site. Aspartate 99 serves as a coordination point for Mg(2+).

This sequence belongs to the MobA family. Monomer. Mg(2+) serves as cofactor.

It localises to the cytoplasm. The catalysed reaction is Mo-molybdopterin + GTP + H(+) = Mo-molybdopterin guanine dinucleotide + diphosphate. Its function is as follows. Transfers a GMP moiety from GTP to Mo-molybdopterin (Mo-MPT) cofactor (Moco or molybdenum cofactor) to form Mo-molybdopterin guanine dinucleotide (Mo-MGD) cofactor. The chain is Molybdenum cofactor guanylyltransferase from Shewanella frigidimarina (strain NCIMB 400).